The sequence spans 214 residues: NAD(P)H-quinone oxidoreductase subunit 5, chloroplastic (214 aa).

2 helical membrane passes run 84–104 (LFPL…GIPF) and 152–172 (SLAI…YSFF).

The protein belongs to the complex I subunit 5 family. As to quaternary structure, NDH is composed of at least 16 different subunits, 5 of which are encoded in the nucleus.

It is found in the plastid. Its subcellular location is the chloroplast thylakoid membrane. It carries out the reaction a plastoquinone + NADH + (n+1) H(+)(in) = a plastoquinol + NAD(+) + n H(+)(out). The catalysed reaction is a plastoquinone + NADPH + (n+1) H(+)(in) = a plastoquinol + NADP(+) + n H(+)(out). In terms of biological role, NDH shuttles electrons from NAD(P)H:plastoquinone, via FMN and iron-sulfur (Fe-S) centers, to quinones in the photosynthetic chain and possibly in a chloroplast respiratory chain. The immediate electron acceptor for the enzyme in this species is believed to be plastoquinone. Couples the redox reaction to proton translocation, and thus conserves the redox energy in a proton gradient. This is NAD(P)H-quinone oxidoreductase subunit 5, chloroplastic (ndhF) from Brachypodium sylvaticum (False brome).